The following is a 101-amino-acid chain: Small ribosomal subunit protein uS14 (101 aa).

The tract at residues 50 to 70 (SLPRDSSPSRQRKRCRQTGRP) is disordered. Over residues 59 to 68 (RQRKRCRQTG) the composition is skewed to basic residues.

It belongs to the universal ribosomal protein uS14 family. Part of the 30S ribosomal subunit. Contacts proteins S3 and S10.

Its function is as follows. Binds 16S rRNA, required for the assembly of 30S particles and may also be responsible for determining the conformation of the 16S rRNA at the A site. The chain is Small ribosomal subunit protein uS14 from Erwinia tasmaniensis (strain DSM 17950 / CFBP 7177 / CIP 109463 / NCPPB 4357 / Et1/99).